Here is a 259-residue protein sequence, read N- to C-terminus: Glucosamine-6-phosphate deaminase (259 aa).

The active-site Proton acceptor; for enolization step is the Asp66. Asp135 acts as the For ring-opening step in catalysis. Residue His137 is the Proton acceptor; for ring-opening step of the active site. The active-site For ring-opening step is Glu142.

It belongs to the glucosamine/galactosamine-6-phosphate isomerase family. NagB subfamily.

The catalysed reaction is alpha-D-glucosamine 6-phosphate + H2O = beta-D-fructose 6-phosphate + NH4(+). It functions in the pathway amino-sugar metabolism; N-acetylneuraminate degradation; D-fructose 6-phosphate from N-acetylneuraminate: step 5/5. Catalyzes the reversible isomerization-deamination of glucosamine 6-phosphate (GlcN6P) to form fructose 6-phosphate (Fru6P) and ammonium ion. This is Glucosamine-6-phosphate deaminase from Pseudarthrobacter chlorophenolicus (strain ATCC 700700 / DSM 12829 / CIP 107037 / JCM 12360 / KCTC 9906 / NCIMB 13794 / A6) (Arthrobacter chlorophenolicus).